A 505-amino-acid polypeptide reads, in one-letter code: Amidophosphoribosyltransferase (505 aa).

Cys2 acts as the Nucleophile in catalysis. The 235-residue stretch at 2-236 folds into the Glutamine amidotransferase type-2 domain; that stretch reads CGIVGIAGVM…PGEAIYITEE (235 aa). Residues Thr305, Asp367, and Asp368 each contribute to the Mg(2+) site.

The protein in the C-terminal section; belongs to the purine/pyrimidine phosphoribosyltransferase family. As to quaternary structure, homotetramer. The cofactor is Mg(2+).

It catalyses the reaction 5-phospho-beta-D-ribosylamine + L-glutamate + diphosphate = 5-phospho-alpha-D-ribose 1-diphosphate + L-glutamine + H2O. The protein operates within purine metabolism; IMP biosynthesis via de novo pathway; N(1)-(5-phospho-D-ribosyl)glycinamide from 5-phospho-alpha-D-ribose 1-diphosphate: step 1/2. With respect to regulation, inhibited by iodoacetamide and by the glutamine analogs chloroketone and DON. Its function is as follows. Catalyzes the formation of phosphoribosylamine from phosphoribosylpyrophosphate (PRPP) and glutamine. Can also use NH(3) in place of glutamine. The sequence is that of Amidophosphoribosyltransferase from Escherichia coli (strain K12).